We begin with the raw amino-acid sequence, 288 residues long: ATP synthase gamma chain (288 aa).

This sequence belongs to the ATPase gamma chain family. As to quaternary structure, F-type ATPases have 2 components, CF(1) - the catalytic core - and CF(0) - the membrane proton channel. CF(1) has five subunits: alpha(3), beta(3), gamma(1), delta(1), epsilon(1). CF(0) has three main subunits: a, b and c.

The protein localises to the cell inner membrane. In terms of biological role, produces ATP from ADP in the presence of a proton gradient across the membrane. The gamma chain is believed to be important in regulating ATPase activity and the flow of protons through the CF(0) complex. The sequence is that of ATP synthase gamma chain from Trichlorobacter lovleyi (strain ATCC BAA-1151 / DSM 17278 / SZ) (Geobacter lovleyi).